Reading from the N-terminus, the 640-residue chain is Threonine--tRNA ligase (640 aa).

The TGS domain occupies 1–61 (MPTITLPDGS…THDATLQIIT (61 aa)). Residues 242–533 (DHRKIGKQLD…LIEHYAGVFP (292 aa)) are catalytic. Zn(2+) is bound by residues C333, H384, and H510.

It belongs to the class-II aminoacyl-tRNA synthetase family. Homodimer. The cofactor is Zn(2+).

The protein resides in the cytoplasm. It carries out the reaction tRNA(Thr) + L-threonine + ATP = L-threonyl-tRNA(Thr) + AMP + diphosphate + H(+). In terms of biological role, catalyzes the attachment of threonine to tRNA(Thr) in a two-step reaction: L-threonine is first activated by ATP to form Thr-AMP and then transferred to the acceptor end of tRNA(Thr). Also edits incorrectly charged L-seryl-tRNA(Thr). This Pseudomonas putida (strain W619) protein is Threonine--tRNA ligase.